A 452-amino-acid polypeptide reads, in one-letter code: Bis(5'-adenosyl)-triphosphatase enpp4 (452 aa).

The N-terminal stretch at 1–19 (MFGRVFIVAVLYCITICKG) is a signal peptide. Topologically, residues 20 to 407 (EDPTNSSTPK…NQWCIQVSEA (388 aa)) are extracellular. Residue Asn24 is glycosylated (N-linked (GlcNAc...) asparagine). Asp36 and Thr72 together coordinate Zn(2+). Catalysis depends on Thr72, which acts as the AMP-threonine intermediate. Asn93 is a binding site for substrate. Residue Asn107 is glycosylated (N-linked (GlcNAc...) asparagine). Tyr154 serves as a coordination point for substrate. N-linked (GlcNAc...) asparagine glycans are attached at residues Asn155 and Asn175. Residues Asp189 and His193 each contribute to the Zn(2+) site. Residue Asp189 participates in substrate binding. Asn202 carries N-linked (GlcNAc...) asparagine glycosylation. Residues Asp237 and His238 each contribute to the Zn(2+) site. Cysteines 254 and 287 form a disulfide. N-linked (GlcNAc...) asparagine glycans are attached at residues Asn259 and Asn327. His336 contributes to the Zn(2+) binding site. N-linked (GlcNAc...) asparagine glycosylation is present at Asn386. Cys394 and Cys401 are joined by a disulfide. A helical transmembrane segment spans residues 408–428 (IGIVIGAIMVLTTLTCIIIML). At 429 to 452 (KKKMPSARPFSRLQFQDDDDPLIG) the chain is on the cytoplasmic side.

The protein belongs to the nucleotide pyrophosphatase/phosphodiesterase family. It depends on Zn(2+) as a cofactor.

Its subcellular location is the cell membrane. The catalysed reaction is P(1),P(3)-bis(5'-adenosyl) triphosphate + H2O = AMP + ADP + 2 H(+). Functionally, hydrolyzes extracellular Ap3A into AMP and ADP, and Ap4A into AMP and ATP. Ap3A and Ap4A are diadenosine polyphosphates thought to induce proliferation of vascular smooth muscle cells. Acts as a procoagulant, mediating platelet aggregation at the site of nascent thrombus via release of ADP from Ap3A and activation of ADP receptors. This chain is Bis(5'-adenosyl)-triphosphatase enpp4 (enpp4), found in Xenopus laevis (African clawed frog).